Consider the following 410-residue polypeptide: BRCA1-A complex subunit Abraxas 1 (410 aa).

In terms of domain architecture, MPN spans 7–160 (TAVLSGFVLG…HALYKPQKGL (154 aa)). S48 carries the post-translational modification Phosphoserine. Residues 208 to 261 (SLKEVQKINEMYTSLQDELKSICEKVEHSERAVEKLLNDVNRLKGEIKKRKQAQ) are a coiled coil. A disordered region spans residues 354–410 (DGWQFKKSRLGGIQNRPSKTDTNSSNQEQASTVSSPETDEEIERMKGSGEYPQSPTF). The span at 368–389 (NRPSKTDTNSSNQEQASTVSSP) shows a compositional bias: polar residues. S387 and S388 each carry phosphoserine. T391 is subject to Phosphothreonine. Residue S407 is modified to Phosphoserine. The pSXXF motif motif lies at 407 to 410 (SPTF).

The protein belongs to the FAM175 family. Abraxas subfamily. As to quaternary structure, component of the ARISC complex, at least composed of UIMC1/RAP80, ABRAXAS1, BRCC3/BRCC36, BABAM2 and BABAM1/NBA1. Component of the BRCA1-A complex, at least composed of the BRCA1, BARD1, UIMC1/RAP80, ABRAXAS1, BRCC3/BRCC36, BABAM2 and BABAM1/NBA1. In the complex, interacts directly with UIMC1/RAP80, BRCC3/BRCC36 and BABAM2. Homodimer. Interacts directly (when phosphorylated at Ser-407) with BRCA1. The phosphorylated homodimer can interact directly with two BRCA1 chains, giving rise to a heterotetramer. Binds polyubiquitin. Phosphorylation of Ser-407 of the pSXXF motif by ATM or ATR constitutes a specific recognition motif for the BRCT domain of BRCA1.

It is found in the nucleus. In terms of biological role, involved in DNA damage response and double-strand break (DSB) repair. Component of the BRCA1-A complex, acting as a central scaffold protein that assembles the various components of the complex and mediates the recruitment of BRCA1. The BRCA1-A complex specifically recognizes 'Lys-63'-linked ubiquitinated histones H2A and H2AX at DNA lesion sites, leading to target the BRCA1-BARD1 heterodimer to sites of DNA damage at DSBs. This complex also possesses deubiquitinase activity that specifically removes 'Lys-63'-linked ubiquitin on histones H2A and H2AX. The sequence is that of BRCA1-A complex subunit Abraxas 1 from Bos taurus (Bovine).